The primary structure comprises 333 residues: tRNA pseudouridine synthase B (333 aa).

Catalysis depends on D46, which acts as the Nucleophile.

The protein belongs to the pseudouridine synthase TruB family. Type 1 subfamily.

The catalysed reaction is uridine(55) in tRNA = pseudouridine(55) in tRNA. Functionally, responsible for synthesis of pseudouridine from uracil-55 in the psi GC loop of transfer RNAs. In Gluconobacter oxydans (strain 621H) (Gluconobacter suboxydans), this protein is tRNA pseudouridine synthase B.